Here is a 345-residue protein sequence, read N- to C-terminus: NADH-quinone oxidoreductase subunit H 1 (345 aa).

Helical transmembrane passes span 11–31 (IILT…ISLL), 50–70 (PNVV…KYIF), 84–104 (FFLA…VIPF), 115–135 (VAIL…IMGG), 161–181 (LGLI…SHIV), 187–207 (AFGL…LFFI), 248–268 (YIAI…GWLS), 277–297 (VFWM…VKAI), and 309–329 (IGWK…AFLA).

This sequence belongs to the complex I subunit 1 family. As to quaternary structure, NDH-1 is composed of 14 different subunits. Subunits NuoA, H, J, K, L, M, N constitute the membrane sector of the complex.

The protein localises to the cell inner membrane. It catalyses the reaction a quinone + NADH + 5 H(+)(in) = a quinol + NAD(+) + 4 H(+)(out). Functionally, NDH-1 shuttles electrons from NADH, via FMN and iron-sulfur (Fe-S) centers, to quinones in the respiratory chain. The immediate electron acceptor for the enzyme in this species is believed to be ubiquinone. Couples the redox reaction to proton translocation (for every two electrons transferred, four hydrogen ions are translocated across the cytoplasmic membrane), and thus conserves the redox energy in a proton gradient. This subunit may bind ubiquinone. This Cereibacter sphaeroides (strain ATCC 17023 / DSM 158 / JCM 6121 / CCUG 31486 / LMG 2827 / NBRC 12203 / NCIMB 8253 / ATH 2.4.1.) (Rhodobacter sphaeroides) protein is NADH-quinone oxidoreductase subunit H 1.